An 858-amino-acid chain; its full sequence is Bifunctional uridylyltransferase/uridylyl-removing enzyme (858 aa).

The uridylyltransferase stretch occupies residues 1-324 (MSAHAAPSPE…PATSGITRVL (324 aa)). Residues 325 to 681 (SADRFVEKQG…ARPSPIGDAL (357 aa)) form a uridylyl-removing region. Residues 443-565 (VDQHILMVLR…VGNERYLTAL (123 aa)) enclose the HD domain. 2 ACT domains span residues 682-763 (QVLV…PSKG) and 790-858 (ILSV…AIAV).

Belongs to the GlnD family. Mg(2+) is required as a cofactor.

It carries out the reaction [protein-PII]-L-tyrosine + UTP = [protein-PII]-uridylyl-L-tyrosine + diphosphate. The catalysed reaction is [protein-PII]-uridylyl-L-tyrosine + H2O = [protein-PII]-L-tyrosine + UMP + H(+). Uridylyltransferase (UTase) activity is inhibited by glutamine, while glutamine activates uridylyl-removing (UR) activity. In terms of biological role, modifies, by uridylylation and deuridylylation, the PII regulatory proteins (GlnB and homologs), in response to the nitrogen status of the cell that GlnD senses through the glutamine level. Under low glutamine levels, catalyzes the conversion of the PII proteins and UTP to PII-UMP and PPi, while under higher glutamine levels, GlnD hydrolyzes PII-UMP to PII and UMP (deuridylylation). Thus, controls uridylylation state and activity of the PII proteins, and plays an important role in the regulation of nitrogen assimilation and metabolism. The protein is Bifunctional uridylyltransferase/uridylyl-removing enzyme of Burkholderia orbicola (strain AU 1054).